A 185-amino-acid polypeptide reads, in one-letter code: Ribosome-recycling factor (185 aa).

The protein belongs to the RRF family.

The protein localises to the cytoplasm. Functionally, responsible for the release of ribosomes from messenger RNA at the termination of protein biosynthesis. May increase the efficiency of translation by recycling ribosomes from one round of translation to another. This chain is Ribosome-recycling factor, found in Xanthomonas oryzae pv. oryzae (strain MAFF 311018).